A 618-amino-acid polypeptide reads, in one-letter code: Leucine aminopeptidase 2 (618 aa).

Residues Gln-140–Gln-142 and Pro-272–Glu-277 each bind a peptide. His-301 provides a ligand contact to Zn(2+). The active-site Proton acceptor is the Glu-302. Residues His-305 and Glu-324 each contribute to the Zn(2+) site. Catalysis depends on Tyr-389, which acts as the Proton donor.

The protein belongs to the peptidase M1 family. Requires Zn(2+) as cofactor.

It localises to the cytoplasm. It is found in the nucleus. The catalysed reaction is an epoxide + H2O = an ethanediol. Functionally, aminopeptidase that preferentially cleaves di- and tripeptides. Also has low epoxide hydrolase activity (in vitro). Can hydrolyze the epoxide leukotriene LTA(4) but it forms preferentially 5,6-dihydroxy-7,9,11,14-eicosatetraenoic acid rather than the cytokine leukotriene B(4) as the product compared to the homologous mammalian enzyme (in vitro). The chain is Leucine aminopeptidase 2 from Emericella nidulans (strain FGSC A4 / ATCC 38163 / CBS 112.46 / NRRL 194 / M139) (Aspergillus nidulans).